The chain runs to 339 residues: Dihydroorotate dehydrogenase (quinone) (339 aa).

FMN-binding positions include 64–68 (AGADK) and Thr88. Lys68 is a binding site for substrate. Position 113-117 (113-117 (NRNGF)) interacts with substrate. FMN is bound by residues Asn141 and Asn174. Asn174 lines the substrate pocket. Ser177 (nucleophile) is an active-site residue. Asn179 is a substrate binding site. Lys219 and Thr247 together coordinate FMN. A substrate-binding site is contributed by 248–249 (NT). Residues Gly270, Gly299, and 320–321 (YS) each bind FMN.

This sequence belongs to the dihydroorotate dehydrogenase family. Type 2 subfamily. Monomer. FMN is required as a cofactor.

Its subcellular location is the cell membrane. It catalyses the reaction (S)-dihydroorotate + a quinone = orotate + a quinol. Its pathway is pyrimidine metabolism; UMP biosynthesis via de novo pathway; orotate from (S)-dihydroorotate (quinone route): step 1/1. Catalyzes the conversion of dihydroorotate to orotate with quinone as electron acceptor. The sequence is that of Dihydroorotate dehydrogenase (quinone) (pyrD) from Haemophilus influenzae (strain ATCC 51907 / DSM 11121 / KW20 / Rd).